Here is a 509-residue protein sequence, read N- to C-terminus: Lysine--tRNA ligase (509 aa).

Positions 418 and 425 each coordinate Mg(2+).

The protein belongs to the class-II aminoacyl-tRNA synthetase family. As to quaternary structure, homodimer. It depends on Mg(2+) as a cofactor.

It is found in the cytoplasm. It catalyses the reaction tRNA(Lys) + L-lysine + ATP = L-lysyl-tRNA(Lys) + AMP + diphosphate. This chain is Lysine--tRNA ligase, found in Acinetobacter baumannii (strain AB307-0294).